The primary structure comprises 185 residues: UPF0200 protein TON_1344 (185 aa).

7–14 (GMPGSGKS) is a binding site for ATP.

Belongs to the UPF0200 family.

The protein is UPF0200 protein TON_1344 of Thermococcus onnurineus (strain NA1).